A 181-amino-acid polypeptide reads, in one-letter code: ATP synthase subunit b (181 aa).

Residues 24–44 (LFPNLPNFIAHLLATIVLVIV) traverse the membrane as a helical segment.

It belongs to the ATPase B chain family. F-type ATPases have 2 components, F(1) - the catalytic core - and F(0) - the membrane proton channel. F(1) has five subunits: alpha(3), beta(3), gamma(1), delta(1), epsilon(1). F(0) has three main subunits: a(1), b(2) and c(10-14). The alpha and beta chains form an alternating ring which encloses part of the gamma chain. F(1) is attached to F(0) by a central stalk formed by the gamma and epsilon chains, while a peripheral stalk is formed by the delta and b chains.

The protein localises to the cell membrane. In terms of biological role, f(1)F(0) ATP synthase produces ATP from ADP in the presence of a proton or sodium gradient. F-type ATPases consist of two structural domains, F(1) containing the extramembraneous catalytic core and F(0) containing the membrane proton channel, linked together by a central stalk and a peripheral stalk. During catalysis, ATP synthesis in the catalytic domain of F(1) is coupled via a rotary mechanism of the central stalk subunits to proton translocation. Functionally, component of the F(0) channel, it forms part of the peripheral stalk, linking F(1) to F(0). This chain is ATP synthase subunit b, found in Mycoplasma capricolum subsp. capricolum (strain California kid / ATCC 27343 / NCTC 10154).